The sequence spans 477 residues: Sporulation-specific protein 77 (477 aa).

The interval 428–452 is disordered; that stretch reads SQQRESSNAESESITSSTEEDEEGL. Over residues 432–444 the composition is skewed to low complexity; sequence ESSNAESESITSS.

Its subcellular location is the cytoplasm. Functionally, required for spore wall assembly and ascus formation. This is Sporulation-specific protein 77 (SPO77) from Saccharomyces cerevisiae (strain ATCC 204508 / S288c) (Baker's yeast).